A 585-amino-acid polypeptide reads, in one-letter code: A-type ATP synthase subunit A (585 aa).

The tract at residues 192–211 is disordered; sequence MRQEWPVREPRPTVEKKTPR. Basic and acidic residues predominate over residues 196 to 211; the sequence is WPVREPRPTVEKKTPR. Residue 237-244 coordinates ATP; it reads GPFGSGKT.

It belongs to the ATPase alpha/beta chains family. As to quaternary structure, has multiple subunits with at least A(3), B(3), C, D, E, F, H, I and proteolipid K(x).

Its subcellular location is the cell membrane. It carries out the reaction ATP + H2O + 4 H(+)(in) = ADP + phosphate + 5 H(+)(out). In terms of biological role, component of the A-type ATP synthase that produces ATP from ADP in the presence of a proton gradient across the membrane. The A chain is the catalytic subunit. The polypeptide is A-type ATP synthase subunit A (Haloquadratum walsbyi (strain DSM 16790 / HBSQ001)).